Reading from the N-terminus, the 241-residue chain is Ribonuclease PH (241 aa).

Residues arginine 87 and 125–127 each bind phosphate; that span reads GTR.

This sequence belongs to the RNase PH family. In terms of assembly, homohexameric ring arranged as a trimer of dimers.

The enzyme catalyses tRNA(n+1) + phosphate = tRNA(n) + a ribonucleoside 5'-diphosphate. Its function is as follows. Phosphorolytic 3'-5' exoribonuclease that plays an important role in tRNA 3'-end maturation. Removes nucleotide residues following the 3'-CCA terminus of tRNAs; can also add nucleotides to the ends of RNA molecules by using nucleoside diphosphates as substrates, but this may not be physiologically important. Probably plays a role in initiation of 16S rRNA degradation (leading to ribosome degradation) during starvation. This Salinispora arenicola (strain CNS-205) protein is Ribonuclease PH.